Here is a 194-residue protein sequence, read N- to C-terminus: AN1-type zinc finger protein 2A (194 aa).

AN1-type zinc fingers lie at residues 4-52 and 94-142; these read PDLG…QKDV and KIFT…RPTI. The Zn(2+) site is built by Cys-10, Cys-15, Cys-25, Cys-28, Cys-33, His-36, His-42, Cys-44, Cys-100, Cys-105, Cys-115, Cys-118, Cys-123, His-126, His-132, and Cys-134. Residues 145-164 are disordered; it reads GCSPVTASESKPSGDPHPGS.

It localises to the cytoplasm. Its subcellular location is the nucleus. The protein is AN1-type zinc finger protein 2A (ZFAND2A) of Pongo abelii (Sumatran orangutan).